The chain runs to 467 residues: Iroquois-class homeodomain protein irx-1-A (467 aa).

Positions 126 to 188 form a DNA-binding region, homeobox; TALE-type; sequence DPGRPKNATR…NARRRLKKEN (63 aa). 3 disordered regions span residues 197 to 306, 318 to 344, and 410 to 467; these read KEDD…PPHS, TSPD…QHPA, and SLSS…LPSA. Composition is skewed to acidic residues over residues 215–225 and 233–244; these read EDDEEIDLESI and NDGEQSNEEEDE. The segment covering 245-262 has biased composition (basic and acidic residues); sequence KLEHLRQGEKESLKKESE. Basic and acidic residues predominate over residues 415-431; the sequence is KTPERTSPKHSDRENVP. The span at 447-460 shows a compositional bias: polar residues; sequence RENTLSQQEGTSRI.

The protein belongs to the TALE/IRO homeobox family. Expressed early in neural differentiation in the neural plate, and expression continues in the neural tube after neural fold closure. Expressed in the presumptive midbrain territory. Also expressed in the prospective neural crest and the preplacodal field, anterior to the neural plate. Strongly expressed in the profundal placode and weakly expressed in the trigeminal placode. Also expressed in the mesoderm in the Spemann organizer from the start of gastrulation, and subsequently in its derivatives; namely in the notochord as well as in the somites of stage 25 embryos, and the somites and notochord of tailbud embryos. Also expressed in specific and overlapping dynamic patterns with irx2 and irx3 during pronephric kidney development. Renal expression begins in the dorsal region of the pronephric anlage at mid neurula stage and continues to at least tailbud stages where expression is confined to the intermediate tubule segment IT1. Renal expression is maintained at tadpole stages.

The protein resides in the nucleus. Functionally, acts partially redundantly with other irx members in neural patterning. Required for formation of the posterior forebrain, midbrain, hindbrain, and to a lesser extent, spinal cord. Acts early in neural plate development to induce expression of some but not all proneural genes, and specify a neural precursor state. Also up-regulates repressors that prevent neuronal differentiation. Patterns the neuroectoderm in both the anterior/posterior and dorsal/ventral axes. Acts primarily as a transcriptional repressor during neural development, and binds to the bmp4 promoter to repress gene expression and thus mediate down-regulation of bmp4 by wnt signaling. Controls multiple processes through bmp4-repression including neural plate development, neural crest specification and Spemann organizer development. Involved in the specification of the preplacodal field at the anterior border of the neural plate. Regulates the genetic cascade of interactions that are necessary for positioning the isthmus organizer and the formation of the midbrain-hindbrain boundary. Required during at least two stages of pronephros kidney development; during neurula stages, maintains transcription of key renal genes to define the size and identity of the pronephric anlage, probably in part through regulation of bmp-signaling. Subsequently required for proper formation of the intermediate tubule segment of the pronephros. Acts principally as a transcriptional activator during pronephros development. The chain is Iroquois-class homeodomain protein irx-1-A (irx1-a) from Xenopus laevis (African clawed frog).